Consider the following 699-residue polypeptide: SPS-sensor serine protease component SSY5 (699 aa).

2 disordered regions span residues 1 to 113 (MVRF…LQGF) and 129 to 158 (VKEE…GNAR). Residues 1–381 (MVRFFGLNKK…YCVKDYIKKA (381 aa)) constitute a propeptide that is removed on maturation. Polar residues predominate over residues 24-38 (NEQNAAETSSSNVSG). Positions 39–51 (NEERIDPNSHDAN) are enriched in basic and acidic residues. Over residues 52–78 (PENANNDDASTTFGSSIQSSSIFSRGR) the composition is skewed to low complexity. Over residues 83 to 93 (TGASSSMATSE) the composition is skewed to polar residues. 2 stretches are compositionally biased toward low complexity: residues 97–109 (HSSG…NSKN) and 144–154 (SSSTSSTLATS). Residues 459-699 (FAITCAHVVL…QWDIDPQLDG (241 aa)) form a serine protease region. Residues His-465, Asp-545, and Ser-640 each act as charge relay system in the active site.

The protein belongs to the peptidase S64 family. In terms of assembly, component of the plasma membrane SPS (SSY1-PTR3-SSY5) amino acid sensor complex. The propeptide is autoproteolytically cleaved from the catalytic domain but remains associated, forming an inactive protease complex. This processing occurs even in the absence of signaling.

The protein resides in the cell membrane. Functionally, protease component of the SPS-sensor system, which regulates the expression of several amino acid-metabolizing enzymes and amino acid- and peptide-permeases in response to extracellular amino acid levels by controlling the activity of two transcription factors, STP1 and STP2. Catalyzes the activation of these transcription factors, which are synthesized as latent cytoplasmic precursors, by proteolytic removal of an N-terminal inhibitory domain containing cytoplasmic retention motifs. SSY5 binds as an inactive protease complex to STP1. In response to extracellular amino acids and dependent on the other SPS-sensor components, the inhibitory propeptide is induced to dissociate, and thereby enables the catalytic domain to process STP1. In Saccharomyces cerevisiae (strain YJM789) (Baker's yeast), this protein is SPS-sensor serine protease component SSY5 (SSY5).